A 363-amino-acid polypeptide reads, in one-letter code: 3-dehydroquinate synthase (363 aa).

Residues 134–135 (TT), lysine 147, and lysine 156 each bind NAD(+). Residues glutamate 189, histidine 254, and histidine 271 each coordinate Zn(2+).

It belongs to the sugar phosphate cyclases superfamily. Dehydroquinate synthase family. It depends on Co(2+) as a cofactor. Zn(2+) is required as a cofactor. NAD(+) serves as cofactor.

Its subcellular location is the cytoplasm. The catalysed reaction is 7-phospho-2-dehydro-3-deoxy-D-arabino-heptonate = 3-dehydroquinate + phosphate. Its pathway is metabolic intermediate biosynthesis; chorismate biosynthesis; chorismate from D-erythrose 4-phosphate and phosphoenolpyruvate: step 2/7. Functionally, catalyzes the conversion of 3-deoxy-D-arabino-heptulosonate 7-phosphate (DAHP) to dehydroquinate (DHQ). The sequence is that of 3-dehydroquinate synthase from Prochlorococcus marinus (strain AS9601).